The primary structure comprises 215 residues: UPF0502 protein YceH (215 aa).

The protein belongs to the UPF0502 family.

In Salmonella paratyphi B (strain ATCC BAA-1250 / SPB7), this protein is UPF0502 protein YceH.